Here is a 114-residue protein sequence, read N- to C-terminus: Putative cysteine proteinase inhibitor 9 (114 aa).

Residues 1–23 (MRTSSLVLFAAVAVFGAACTAAA) form the signal peptide.

Belongs to the cystatin family. Phytocystatin subfamily.

It localises to the secreted. Specific inhibitor of cysteine proteinases. Probably involved in the regulation of endogenous processes and in defense against pests and pathogens. This chain is Putative cysteine proteinase inhibitor 9, found in Oryza sativa subsp. japonica (Rice).